Reading from the N-terminus, the 215-residue chain is Mite allergen Der p 7 (215 aa).

The N-terminal stretch at 1–17 (MMKLLLIAAAAFVAVSA) is a signal peptide. N-linked (GlcNAc...) asparagine glycosylation occurs at Asn151.

The protein belongs to the mite group 7 allergen family.

Its subcellular location is the secreted. In Dermatophagoides pteronyssinus (European house dust mite), this protein is Mite allergen Der p 7 (DERP7).